Here is a 292-residue protein sequence, read N- to C-terminus: CCR4-NOT transcription complex subunit 8 (292 aa).

Residues D40, E42, D161, and D230 each coordinate a divalent metal cation.

The protein belongs to the CAF1 family. As to quaternary structure, component of the CCR4-NOT complex; distinct complexes seem to exist that differ in the participation of probably mutually exclusive catalytic subunits; the complex contains two deadenylase subunits, CNOT6 or CNOT6L, and CNOT7 or CNOT8. In the complex interacts directly with CNOT1. Interacts with BTG1, BTG2 and TOB1. Interacts with BTG4.

Its subcellular location is the cytoplasm. It localises to the nucleus. It carries out the reaction Exonucleolytic cleavage of poly(A) to 5'-AMP.. Has 3'-5' poly(A) exoribonuclease activity for synthetic poly(A) RNA substrate. Its function seems to be partially redundant with that of CNOT7. Catalytic component of the CCR4-NOT complex which is linked to various cellular processes including bulk mRNA degradation, miRNA-mediated repression, translational repression during translational initiation and general transcription regulation. During miRNA-mediated repression the complex also seems to act as translational repressor during translational initiation. Additional complex functions may be a consequence of its influence on mRNA expression. Associates with members of the BTG family such as TOB1 and BTG2 and is required for their anti-proliferative activity. This is CCR4-NOT transcription complex subunit 8 (Cnot8) from Mus musculus (Mouse).